A 525-amino-acid polypeptide reads, in one-letter code: Peptide chain release factor 3 (525 aa).

The tr-type G domain maps to 11 to 279 (NKRRTFAIIS…TYLQFAPAPS (269 aa)). Residues 20–27 (SHPDAGKT), 88–92 (DTPGH), and 142–145 (NKFD) contribute to the GTP site.

It belongs to the TRAFAC class translation factor GTPase superfamily. Classic translation factor GTPase family. PrfC subfamily.

It localises to the cytoplasm. In terms of biological role, increases the formation of ribosomal termination complexes and stimulates activities of RF-1 and RF-2. It binds guanine nucleotides and has strong preference for UGA stop codons. It may interact directly with the ribosome. The stimulation of RF-1 and RF-2 is significantly reduced by GTP and GDP, but not by GMP. This Limosilactobacillus reuteri (strain DSM 20016) (Lactobacillus reuteri) protein is Peptide chain release factor 3.